An 873-amino-acid polypeptide reads, in one-letter code: Nitrate reductase [NADPH] (873 aa).

A disordered region spans residues 30–61 (TELDTADIPLPPPSKEPTEVLSLDKTTPDSHV). Cys150 provides a ligand contact to Mo-molybdopterin. A Cytochrome b5 heme-binding domain is found at 512 to 587 (TRIIDLEEFK…MPDYHIGTLD (76 aa)). Residues His547 and His570 each coordinate heme. Positions 616-729 (KAWTKATLTK…KGPTGRFEYL (114 aa)) constitute an FAD-binding FR-type domain. FAD is bound by residues 672 to 675 (RSYT), 689 to 693 (LIKIY), 703 to 705 (KMT), and Thr756. 843–852 (MVLVCGPEAM) is a binding site for NADP(+).

Belongs to the nitrate reductase family. As to quaternary structure, homodimer. It depends on FAD as a cofactor. Requires heme as cofactor. Mo-molybdopterin serves as cofactor.

It carries out the reaction nitrite + NADP(+) + H2O = nitrate + NADPH + H(+). Functionally, nitrate reductase is a key enzyme involved in the first step of nitrate assimilation in plants, fungi and bacteria. The chain is Nitrate reductase [NADPH] (niaD) from Emericella nidulans (strain FGSC A4 / ATCC 38163 / CBS 112.46 / NRRL 194 / M139) (Aspergillus nidulans).